The sequence spans 289 residues: Protease HtpX (289 aa).

2 helical membrane-spanning segments follow: residues 5 to 25 (IVLF…VMSL) and 33 to 53 (MSGL…ISLL). Histidine 140 contacts Zn(2+). Residue glutamate 141 is part of the active site. Histidine 144 is a Zn(2+) binding site. The next 2 membrane-spanning stretches (helical) occupy residues 155 to 175 (LLQG…GGFI) and 193 to 213 (GIVL…TMWF). Glutamate 218 is a Zn(2+) binding site.

Belongs to the peptidase M48B family. Zn(2+) is required as a cofactor.

Its subcellular location is the cell inner membrane. The chain is Protease HtpX from Xylella fastidiosa (strain M12).